A 419-amino-acid polypeptide reads, in one-letter code: tRNA(Ile)-lysidine synthase (419 aa).

25–30 (SGGIDS) is a binding site for ATP.

It belongs to the tRNA(Ile)-lysidine synthase family.

It is found in the cytoplasm. It catalyses the reaction cytidine(34) in tRNA(Ile2) + L-lysine + ATP = lysidine(34) in tRNA(Ile2) + AMP + diphosphate + H(+). Its function is as follows. Ligates lysine onto the cytidine present at position 34 of the AUA codon-specific tRNA(Ile) that contains the anticodon CAU, in an ATP-dependent manner. Cytidine is converted to lysidine, thus changing the amino acid specificity of the tRNA from methionine to isoleucine. This chain is tRNA(Ile)-lysidine synthase, found in Actinobacillus pleuropneumoniae serotype 7 (strain AP76).